Consider the following 185-residue polypeptide: MKNVTDSFVSLGHWPSAGGFGFNTDILATNPINLSVVLGVLIFFGKGVLSDLLDNRKQRILNTIRNSEELREGAIEQLEKARARLRKVEMEADQYRVNGYSEIEREKLNLINSTYNTLEQLENYKNETIHFEQQRAINQVRQRVLQQALQGALGTINSCLNKELHLRTISANIGMFGSMKEIRNN.

A helical transmembrane segment spans residues 27 to 49 (LATNPINLSVVLGVLIFFGKGVL).

It belongs to the ATPase B chain family. In terms of assembly, F-type ATPases have 2 components, F(1) - the catalytic core - and F(0) - the membrane proton channel. F(1) has five subunits: alpha(3), beta(3), gamma(1), delta(1), epsilon(1). F(0) has four main subunits: a(1), b(1), b'(1) and c(10-14). The alpha and beta chains form an alternating ring which encloses part of the gamma chain. F(1) is attached to F(0) by a central stalk formed by the gamma and epsilon chains, while a peripheral stalk is formed by the delta, b and b' chains.

The protein localises to the plastid. It localises to the chloroplast thylakoid membrane. Its function is as follows. F(1)F(0) ATP synthase produces ATP from ADP in the presence of a proton or sodium gradient. F-type ATPases consist of two structural domains, F(1) containing the extramembraneous catalytic core and F(0) containing the membrane proton channel, linked together by a central stalk and a peripheral stalk. During catalysis, ATP synthesis in the catalytic domain of F(1) is coupled via a rotary mechanism of the central stalk subunits to proton translocation. Functionally, component of the F(0) channel, it forms part of the peripheral stalk, linking F(1) to F(0). The polypeptide is ATP synthase subunit b, chloroplastic (Vitis vinifera (Grape)).